Consider the following 380-residue polypeptide: Alanine racemase (380 aa).

Lysine 34 functions as the Proton acceptor; specific for D-alanine in the catalytic mechanism. At lysine 34 the chain carries N6-(pyridoxal phosphate)lysine. Arginine 135 serves as a coordination point for substrate. The Proton acceptor; specific for L-alanine role is filled by tyrosine 267. Methionine 315 lines the substrate pocket.

The protein belongs to the alanine racemase family. Pyridoxal 5'-phosphate is required as a cofactor.

It carries out the reaction L-alanine = D-alanine. The protein operates within amino-acid biosynthesis; D-alanine biosynthesis; D-alanine from L-alanine: step 1/1. In terms of biological role, catalyzes the interconversion of L-alanine and D-alanine. May also act on other amino acids. This Lawsonia intracellularis (strain PHE/MN1-00) protein is Alanine racemase (alr).